The primary structure comprises 406 residues: Formate-dependent phosphoribosylglycinamide formyltransferase (406 aa).

Residues 27–28 (EL) and glutamate 87 contribute to the N(1)-(5-phospho-beta-D-ribosyl)glycinamide site. ATP-binding positions include arginine 120, lysine 162, 167–172 (SSGKGQ), 202–205 (EGFI), and glutamate 210. Residues 125–320 (RLAAETLGLP…EFELHARALL (196 aa)) form the ATP-grasp domain. Mg(2+) is bound by residues glutamate 279 and glutamate 291. N(1)-(5-phospho-beta-D-ribosyl)glycinamide-binding positions include aspartate 298, lysine 367, and 374-375 (RR).

It belongs to the PurK/PurT family. As to quaternary structure, homodimer.

The catalysed reaction is N(1)-(5-phospho-beta-D-ribosyl)glycinamide + formate + ATP = N(2)-formyl-N(1)-(5-phospho-beta-D-ribosyl)glycinamide + ADP + phosphate + H(+). It participates in purine metabolism; IMP biosynthesis via de novo pathway; N(2)-formyl-N(1)-(5-phospho-D-ribosyl)glycinamide from N(1)-(5-phospho-D-ribosyl)glycinamide (formate route): step 1/1. Functionally, involved in the de novo purine biosynthesis. Catalyzes the transfer of formate to 5-phospho-ribosyl-glycinamide (GAR), producing 5-phospho-ribosyl-N-formylglycinamide (FGAR). Formate is provided by PurU via hydrolysis of 10-formyl-tetrahydrofolate. This Bordetella parapertussis (strain 12822 / ATCC BAA-587 / NCTC 13253) protein is Formate-dependent phosphoribosylglycinamide formyltransferase.